A 339-amino-acid polypeptide reads, in one-letter code: tRNA N6-adenosine threonylcarbamoyltransferase (339 aa).

2 residues coordinate Fe cation: histidine 111 and histidine 115. Substrate contacts are provided by residues 139 to 143, aspartate 172, glycine 185, aspartate 189, and asparagine 280; that span reads LVSGG. Position 308 (aspartate 308) interacts with Fe cation.

This sequence belongs to the KAE1 / TsaD family. Fe(2+) serves as cofactor.

It localises to the cytoplasm. It catalyses the reaction L-threonylcarbamoyladenylate + adenosine(37) in tRNA = N(6)-L-threonylcarbamoyladenosine(37) in tRNA + AMP + H(+). In terms of biological role, required for the formation of a threonylcarbamoyl group on adenosine at position 37 (t(6)A37) in tRNAs that read codons beginning with adenine. Is involved in the transfer of the threonylcarbamoyl moiety of threonylcarbamoyl-AMP (TC-AMP) to the N6 group of A37, together with TsaE and TsaB. TsaD likely plays a direct catalytic role in this reaction. This Bacteroides thetaiotaomicron (strain ATCC 29148 / DSM 2079 / JCM 5827 / CCUG 10774 / NCTC 10582 / VPI-5482 / E50) protein is tRNA N6-adenosine threonylcarbamoyltransferase.